A 162-amino-acid polypeptide reads, in one-letter code: Glutathione peroxidase-like peroxiredoxin GPX5 (162 aa).

Residue Cys38 is modified to S-selanylcysteine. The active site involves Asn87.

Belongs to the glutathione peroxidase family. Cys-87 is S-selanylated when selenium levels are high. S-selanylation may increase or be important for glutathione peroxidase activity.

The protein localises to the cytoplasm. The enzyme catalyses 2 glutathione + H2O2 = glutathione disulfide + 2 H2O. The catalysed reaction is a hydroperoxide + [thioredoxin]-dithiol = an alcohol + [thioredoxin]-disulfide + H2O. Its function is as follows. Has thioredoxin peroxidase activity. May also have glutathione peroxidase activity, although this activity is controversial. Protects cells against reactive oxygen species, which may include photooxidative stress, hydrogen peroxide and organic hydroperoxides. This chain is Glutathione peroxidase-like peroxiredoxin GPX5, found in Chlamydomonas reinhardtii (Chlamydomonas smithii).